Consider the following 230-residue polypeptide: Urease accessory protein UreE (230 aa).

Positions 197–230 are disordered; that stretch reads LHIHAIHSHGDGDSHNHDHDHSHSHGDHDHDHKH. Over residues 204–230 the composition is skewed to basic and acidic residues; the sequence is SHGDGDSHNHDHDHSHSHGDHDHDHKH.

The protein belongs to the UreE family.

Its subcellular location is the cytoplasm. Its function is as follows. Involved in urease metallocenter assembly. Binds nickel. Probably functions as a nickel donor during metallocenter assembly. The sequence is that of Urease accessory protein UreE from Yersinia aldovae.